The sequence spans 250 residues: Proteasome subunit alpha type-4 (250 aa).

The protein belongs to the peptidase T1A family. In terms of assembly, the 26S proteasome consists of a 20S proteasome core and two 19S regulatory subunits. The 20S proteasome core is composed of 28 subunits that are arranged in four stacked rings, resulting in a barrel-shaped structure. The two end rings are each formed by seven alpha subunits, and the two central rings are each formed by seven beta subunits. The catalytic chamber with the active sites is on the inside of the barrel.

It localises to the cytoplasm. The protein localises to the nucleus. Its function is as follows. The proteasome is a multicatalytic proteinase complex which is characterized by its ability to cleave peptides with Arg, Phe, Tyr, Leu, and Glu adjacent to the leaving group at neutral or slightly basic pH. The proteasome has an ATP-dependent proteolytic activity. The protein is Proteasome subunit alpha type-4 (psmA4) of Dictyostelium discoideum (Social amoeba).